We begin with the raw amino-acid sequence, 560 residues long: Protein GAT2 (560 aa).

Disordered stretches follow at residues 274-297, 345-383, and 412-461; these read RQQE…FSNK, FLST…ISSS, and LNTK…SDEK. Positions 347-361 are enriched in low complexity; the sequence is STSSSSPSPTAGSAP. The span at 369-378 shows a compositional bias: basic and acidic residues; it reads RQDDPNDKKM. Basic residues predominate over residues 414–425; that stretch reads TKKKNNRGRPRA. Residues 428 to 456 are compositionally biased toward polar residues; the sequence is RQPTLTTSSHFINNSNPGAAAVSTTTPAA. The GATA-type zinc-finger motif lies at 472–497; the sequence is CFHCGETETPEWRKGPYGTRTLCNAC.

This chain is Protein GAT2 (GAT2), found in Saccharomyces cerevisiae (strain ATCC 204508 / S288c) (Baker's yeast).